The chain runs to 885 residues: GPI ethanolamine phosphate transferase 2 (885 aa).

3 N-linked (GlcNAc...) asparagine glycosylation sites follow: Asn-82, Asn-155, and Asn-194. A helical transmembrane segment spans residues 413–433; the sequence is DIYAGALILVITALAVIVVFN. N-linked (GlcNAc...) asparagine glycosylation is present at Asn-443. A run of 3 helical transmembrane segments spans residues 447–467, 473–493, and 495–514; these read VMFY…SSLI, IWYF…FDTF, and SLQN…FMRS. A glycan (N-linked (GlcNAc...) asparagine) is linked at Asn-516. Transmembrane regions (helical) follow at residues 539 to 559, 581 to 601, 648 to 668, 697 to 717, 726 to 746, 768 to 788, 820 to 840, and 865 to 885; these read LMWG…YIQG, GLIS…FKLL, IQLS…RVII, ENIP…KLIY, YILT…FCMG, VFLV…FWSL, ILLV…VNLV, and SWIL…VLLF.

This sequence belongs to the PIGG/PIGN/PIGO family. PIGG subfamily.

It localises to the endoplasmic reticulum membrane. Its pathway is glycolipid biosynthesis; glycosylphosphatidylinositol-anchor biosynthesis. Ethanolamine phosphate transferase involved in glycosylphosphatidylinositol-anchor biosynthesis. Transfers ethanolamine phosphate to the GPI second mannose. The sequence is that of GPI ethanolamine phosphate transferase 2 (GPI7) from Candida albicans (strain SC5314 / ATCC MYA-2876) (Yeast).